Here is a 223-residue protein sequence, read N- to C-terminus: Deoxyribose-phosphate aldolase (223 aa).

The active-site Proton donor/acceptor is aspartate 89. The active-site Schiff-base intermediate with acetaldehyde is lysine 152. Residue lysine 181 is the Proton donor/acceptor of the active site.

Belongs to the DeoC/FbaB aldolase family. DeoC type 1 subfamily.

The protein resides in the cytoplasm. The catalysed reaction is 2-deoxy-D-ribose 5-phosphate = D-glyceraldehyde 3-phosphate + acetaldehyde. It functions in the pathway carbohydrate degradation; 2-deoxy-D-ribose 1-phosphate degradation; D-glyceraldehyde 3-phosphate and acetaldehyde from 2-deoxy-alpha-D-ribose 1-phosphate: step 2/2. In terms of biological role, catalyzes a reversible aldol reaction between acetaldehyde and D-glyceraldehyde 3-phosphate to generate 2-deoxy-D-ribose 5-phosphate. The polypeptide is Deoxyribose-phosphate aldolase (Bacillus cytotoxicus (strain DSM 22905 / CIP 110041 / 391-98 / NVH 391-98)).